Here is a 194-residue protein sequence, read N- to C-terminus: dTTP/UTP pyrophosphatase (194 aa).

Aspartate 66 acts as the Proton acceptor in catalysis.

The protein belongs to the Maf family. YhdE subfamily. The cofactor is a divalent metal cation.

The protein resides in the cytoplasm. The enzyme catalyses dTTP + H2O = dTMP + diphosphate + H(+). It carries out the reaction UTP + H2O = UMP + diphosphate + H(+). Its function is as follows. Nucleoside triphosphate pyrophosphatase that hydrolyzes dTTP and UTP. May have a dual role in cell division arrest and in preventing the incorporation of modified nucleotides into cellular nucleic acids. This is dTTP/UTP pyrophosphatase from Anaeromyxobacter dehalogenans (strain 2CP-1 / ATCC BAA-258).